The primary structure comprises 290 residues: uncharacterized protein (290 aa).

The active-site Schiff-base intermediate with substrate is the Lys-203.

Belongs to the DeoC/FbaB aldolase family.

This is an uncharacterized protein from Pasteurella multocida (strain Pm70).